The sequence spans 1004 residues: Outer cell wall protein (1004 aa).

The first 24 residues, 1–24 (MNKKVVLSVLSTTLVASVAASAFA), serve as a signal peptide directing secretion.

As to quaternary structure, the outer cell wall layer is composed of subunits of the outer cell wall protein. These proteins form a hexagonal array with a lattice constant of 14.5 nm in the outer cell wall layers.

Its subcellular location is the secreted. It localises to the cell wall. The protein resides in the S-layer. In terms of biological role, the outer wall protein binds to the middle cell wall protein. This is Outer cell wall protein from Brevibacillus brevis (strain 47 / JCM 6285 / NBRC 100599).